The sequence spans 136 residues: Large ribosomal subunit protein uL16 (136 aa).

A compositionally biased stretch (basic residues) spans 1–17 (MLQPKRTKFRKRHKGRN). Residues 1 to 21 (MLQPKRTKFRKRHKGRNRGLA) are disordered.

This sequence belongs to the universal ribosomal protein uL16 family. As to quaternary structure, part of the 50S ribosomal subunit.

In terms of biological role, binds 23S rRNA and is also seen to make contacts with the A and possibly P site tRNAs. In Buchnera aphidicola subsp. Acyrthosiphon kondoi (Acyrthosiphon kondoi symbiotic bacterium), this protein is Large ribosomal subunit protein uL16.